The chain runs to 420 residues: Membrane protein UL43 homolog (420 aa).

11 consecutive transmembrane segments (helical) span residues isoleucine 58–isoleucine 78, lysine 81–valine 101, isoleucine 114–threonine 134, leucine 157–threonine 177, leucine 181–proline 201, glycine 203–valine 223, glutamine 278–leucine 298, threonine 312–proline 332, isoleucine 343–valine 363, leucine 364–isoleucine 384, and valine 399–leucine 419.

Belongs to the alphaherpesvirinae HHV-1 UL43 family.

It localises to the host membrane. The chain is Membrane protein UL43 homolog (MDV056) from Gallus gallus (Chicken).